A 77-amino-acid polypeptide reads, in one-letter code: MSTKNRTRRTTTRNIRFPNQMIEQINIALEQKGSGNFSAWVIEACRRRLCSEKRVSSEANKEKSDITELLRKQVRPD.

The tract at residues 53-77 is disordered; it reads KRVSSEANKEKSDITELLRKQVRPD.

This is an uncharacterized protein from Escherichia coli (strain K12).